The chain runs to 321 residues: tRNA U34 carboxymethyltransferase (321 aa).

Carboxy-S-adenosyl-L-methionine contacts are provided by residues Lys90, Trp104, Lys109, Gly129, Asp151–Thr153, Ile180–Glu181, Met195, Tyr199, and Arg314.

Belongs to the class I-like SAM-binding methyltransferase superfamily. CmoB family. Homotetramer.

The enzyme catalyses carboxy-S-adenosyl-L-methionine + 5-hydroxyuridine(34) in tRNA = 5-carboxymethoxyuridine(34) in tRNA + S-adenosyl-L-homocysteine + H(+). Its function is as follows. Catalyzes carboxymethyl transfer from carboxy-S-adenosyl-L-methionine (Cx-SAM) to 5-hydroxyuridine (ho5U) to form 5-carboxymethoxyuridine (cmo5U) at position 34 in tRNAs. This is tRNA U34 carboxymethyltransferase from Haemophilus influenzae (strain PittEE).